An 87-amino-acid chain; its full sequence is UPF0250 protein YbeD (87 aa).

The protein belongs to the UPF0250 family.

This is UPF0250 protein YbeD from Shigella boydii serotype 18 (strain CDC 3083-94 / BS512).